The chain runs to 203 residues: Protein-L-isoaspartate O-methyltransferase (203 aa).

S50 is a catalytic residue.

This sequence belongs to the methyltransferase superfamily. L-isoaspartyl/D-aspartyl protein methyltransferase family.

It localises to the cytoplasm. It carries out the reaction [protein]-L-isoaspartate + S-adenosyl-L-methionine = [protein]-L-isoaspartate alpha-methyl ester + S-adenosyl-L-homocysteine. Functionally, catalyzes the methyl esterification of L-isoaspartyl residues in peptides and proteins that result from spontaneous decomposition of normal L-aspartyl and L-asparaginyl residues. It plays a role in the repair and/or degradation of damaged proteins. This chain is Protein-L-isoaspartate O-methyltransferase, found in Methanococcoides burtonii (strain DSM 6242 / NBRC 107633 / OCM 468 / ACE-M).